Reading from the N-terminus, the 1333-residue chain is ABC transporter ATP-binding protein/permease PDR18 (1333 aa).

Residues 13-33 traverse the membrane as a helical segment; the sequence is FLEGQTFGDILCLPWTIIKGI. An ABC transporter 1 domain is found at 30–281; sequence IKGIRERKNR…FENMGYLCPP (252 aa). N-linked (GlcNAc...) asparagine glycosylation is found at Asn48, Asn144, Asn205, and Asn350. The next 6 membrane-spanning stretches (helical) occupy residues 392 to 412, 425 to 445, 474 to 494, 499 to 519, 534 to 554, and 642 to 662; these read YTVI…SLFY, SGVL…NISF, FPFR…LAGL, GAFF…TSLF, SIAG…IQLP, and FGIM…FTEY. Asn697 and Asn733 each carry an N-linked (GlcNAc...) asparagine glycan. The region spanning 729 to 971 is the ABC transporter 2 domain; sequence FIWKNVSFTI…VIKYFEKNGA (243 aa). 765–772 contributes to the ATP binding site; sequence GESGAGKT. An N-linked (GlcNAc...) asparagine glycan is attached at Asn958. A run of 6 helical transmembrane segments spans residues 1071 to 1091, 1092 to 1112, 1150 to 1170, 1178 to 1198, 1210 to 1230, and 1235 to 1255; these read LLMI…VNAI, GLQN…PATN, PYHL…LGVF, VFYL…ALMI, VIVG…QPAS, and FWTF…LVGL. The N-linked (GlcNAc...) asparagine glycan is linked to Asn1320.

It belongs to the ABC transporter superfamily. ABCG family. PDR (TC 3.A.1.205) subfamily.

The protein resides in the membrane. In Saccharomyces cerevisiae (strain ATCC 204508 / S288c) (Baker's yeast), this protein is ABC transporter ATP-binding protein/permease PDR18 (PDR18).